Reading from the N-terminus, the 174-residue chain is von Hippel-Lindau tumor suppressor homolog (174 aa).

This sequence belongs to the VHL family. Interacts with hif-1 (hydroxylated on 'Pro-621'); the interaction induces hif-1 degradation. May be a component of the cullin E3 ubiquitin ligase complex.

The protein operates within protein modification; protein ubiquitination. Its function is as follows. Involved in the response to variation in environmental oxygen levels by targeting the hypoxia-inducible transcription factor hif-1 for proteasomal degradation when oxygen levels are normal (around 20%). By regulating hif-1 expression, plays a role in iron homeostasis, aging, heat acclimation and progeny size. Mediates resistance to enteropathogenic E.coli. Mediates susceptibility to B.thuringiensis pore-forming toxins. Not involved in P.aeruginosa susceptibility. This Caenorhabditis elegans protein is von Hippel-Lindau tumor suppressor homolog.